A 188-amino-acid chain; its full sequence is GMP synthase [glutamine-hydrolyzing] subunit A (188 aa).

The Glutamine amidotransferase type-1 domain occupies Met-1–Glu-188. The active-site Nucleophile is the Cys-76. Residues His-163 and Glu-165 contribute to the active site.

Heterodimer composed of a glutamine amidotransferase subunit (A) and a GMP-binding subunit (B).

The enzyme catalyses XMP + L-glutamine + ATP + H2O = GMP + L-glutamate + AMP + diphosphate + 2 H(+). The protein operates within purine metabolism; GMP biosynthesis; GMP from XMP (L-Gln route): step 1/1. Catalyzes the synthesis of GMP from XMP. In Methanocaldococcus jannaschii (strain ATCC 43067 / DSM 2661 / JAL-1 / JCM 10045 / NBRC 100440) (Methanococcus jannaschii), this protein is GMP synthase [glutamine-hydrolyzing] subunit A.